Here is a 284-residue protein sequence, read N- to C-terminus: 2-dehydro-3-deoxyphosphooctonate aldolase (284 aa).

Belongs to the KdsA family.

It is found in the cytoplasm. It carries out the reaction D-arabinose 5-phosphate + phosphoenolpyruvate + H2O = 3-deoxy-alpha-D-manno-2-octulosonate-8-phosphate + phosphate. The protein operates within carbohydrate biosynthesis; 3-deoxy-D-manno-octulosonate biosynthesis; 3-deoxy-D-manno-octulosonate from D-ribulose 5-phosphate: step 2/3. Its pathway is bacterial outer membrane biogenesis; lipopolysaccharide biosynthesis. This Sodalis glossinidius (strain morsitans) protein is 2-dehydro-3-deoxyphosphooctonate aldolase.